Here is a 397-residue protein sequence, read N- to C-terminus: S-adenosylmethionine synthase (397 aa).

His15 is an ATP binding site. Residue Asp17 participates in Mg(2+) binding. Glu43 lines the K(+) pocket. Residues Glu56 and Gln99 each coordinate L-methionine. Residues 99-109 (QSGDIAMGVDE) are flexible loop. ATP-binding positions include 175–177 (DGK), 241–242 (RF), Asp250, 256–257 (RK), Ala273, and Lys277. Asp250 contacts L-methionine. Lys281 lines the L-methionine pocket.

This sequence belongs to the AdoMet synthase family. As to quaternary structure, homotetramer; dimer of dimers. Requires Mg(2+) as cofactor. The cofactor is K(+).

Its subcellular location is the cytoplasm. The catalysed reaction is L-methionine + ATP + H2O = S-adenosyl-L-methionine + phosphate + diphosphate. It participates in amino-acid biosynthesis; S-adenosyl-L-methionine biosynthesis; S-adenosyl-L-methionine from L-methionine: step 1/1. Functionally, catalyzes the formation of S-adenosylmethionine (AdoMet) from methionine and ATP. The overall synthetic reaction is composed of two sequential steps, AdoMet formation and the subsequent tripolyphosphate hydrolysis which occurs prior to release of AdoMet from the enzyme. This is S-adenosylmethionine synthase from Clostridioides difficile (strain 630) (Peptoclostridium difficile).